The following is a 294-amino-acid chain: Probable ABC transporter permease protein YqgI (294 aa).

6 consecutive transmembrane segments (helical) span residues 14 to 34 (FGLCAAIIAAILVGLFSYIII), 66 to 86 (FYILFITMLITIPLGVGGGVF), 99 to 121 (FIRTCIEVLSSLPSIVIGMFGLL), 126 to 148 (LTGWGYTIIGGALALTVFNLPVM), 190 to 210 (IITGAILASGRVFGEAAALLF), and 260 to 280 (AIANGGSAVLVISVLVFNLAA). The 219-residue stretch at 62-280 (LFNSFYILFI…ISVLVFNLAA (219 aa)) folds into the ABC transmembrane type-1 domain.

This sequence belongs to the binding-protein-dependent transport system permease family. CysTW subfamily.

The protein resides in the cell membrane. Functionally, part of the binding-protein-dependent transport system YqgGHIJK. Probably responsible for the translocation of the substrate across the membrane. This Bacillus subtilis (strain 168) protein is Probable ABC transporter permease protein YqgI (yqgI).